A 110-amino-acid polypeptide reads, in one-letter code: Iron-sulfur cluster assembly protein CyaY (110 aa).

Belongs to the frataxin family.

In terms of biological role, involved in iron-sulfur (Fe-S) cluster assembly. May act as a regulator of Fe-S biogenesis. This Pseudomonas fluorescens (strain SBW25) protein is Iron-sulfur cluster assembly protein CyaY.